We begin with the raw amino-acid sequence, 150 residues long: Macrodomain Ter protein (150 aa).

Belongs to the MatP family. In terms of assembly, homodimer.

The protein resides in the cytoplasm. Its function is as follows. Required for spatial organization of the terminus region of the chromosome (Ter macrodomain) during the cell cycle. Prevents early segregation of duplicated Ter macrodomains during cell division. Binds specifically to matS, which is a 13 bp signature motif repeated within the Ter macrodomain. This is Macrodomain Ter protein from Escherichia coli O8 (strain IAI1).